The following is a 113-amino-acid chain: Molt-inhibiting hormone (113 aa).

The N-terminal stretch at methionine 1–alanine 35 is a signal peptide. Intrachain disulfides connect cysteine 42-cysteine 79, cysteine 59-cysteine 75, and cysteine 62-cysteine 88.

Belongs to the arthropod CHH/MIH/GIH/VIH hormone family.

The protein localises to the secreted. Inhibits Y-organs where molting hormone (ecdysteroid) is secreted. A molting cycle is initiated when MIH secretion diminishes or stops. This chain is Molt-inhibiting hormone, found in Callinectes sapidus (Blue crab).